The sequence spans 252 residues: Petrobactin import ATP-binding protein YclP (252 aa).

The region spanning 2–236 is the ABC transporter domain; that stretch reads VEVRNVSKQY…SVLEEIYDMT (235 aa). 34–41 is a binding site for ATP; it reads GPNGAGKS.

This sequence belongs to the ABC transporter superfamily. In terms of assembly, the complex is composed of two ATP-binding proteins (YclP), two transmembrane proteins (YclN and YclO) and a solute-binding protein (YclQ).

The protein resides in the cell membrane. The enzyme catalyses a Fe(III)-siderophore(out) + ATP + H2O = a Fe(III)-siderophore(in) + ADP + phosphate + H(+). In terms of biological role, part of the ABC transporter complex YclNOPQ involved in uptake of ferric-petrobactin. Petrobactin is a photoreactive 3,4-catecholate siderophore produced by many members of the B.cereus group, including B.anthracis. Probably responsible for energy coupling to the transport system. The chain is Petrobactin import ATP-binding protein YclP (yclP) from Bacillus subtilis (strain 168).